Here is a 242-residue protein sequence, read N- to C-terminus: 2-amino-5-formylamino-6-ribosylaminopyrimidin-4(3H)-one 5'-monophosphate deformylase (242 aa).

Residues glutamate 46, histidine 48, aspartate 57, and histidine 125 each coordinate Fe cation.

The protein belongs to the creatininase superfamily. FAPy deformylase family. Homodimer. The cofactor is Fe(2+). It depends on Zn(2+) as a cofactor.

It catalyses the reaction 2-amino-5-formylamino-6-(5-phospho-D-ribosylamino)pyrimidin-4(3H)-one + H2O = 2,5-diamino-6-(1-D-ribosylamino)pyrimidin-4(3H)-one 5'-phosphate + formate + H(+). Its pathway is cofactor biosynthesis; coenzyme F420 biosynthesis. It functions in the pathway cofactor biosynthesis; riboflavin biosynthesis. Its function is as follows. Catalyzes the hydrolysis of the formamide of 2-amino-5-formylamino-6-ribosylamino-4(3H)-pyrimidinone 5'-monophosphate (FAPy) to form 2,5-diamino-6-ribosylamino-4(3H)-pyrimidinone 5'-phosphate (APy). The sequence is that of 2-amino-5-formylamino-6-ribosylaminopyrimidin-4(3H)-one 5'-monophosphate deformylase from Methanococcus aeolicus (strain ATCC BAA-1280 / DSM 17508 / OCM 812 / Nankai-3).